Here is a 609-residue protein sequence, read N- to C-terminus: MADSERSEAFGTPDDTPLSSNDAAELEQLRREAAVLREQLESAVGPQGTARSARDVHQLEARIDSLAARNSKLMETLKEARQQLLALREEVDRLGQPPSGYGVLLSAHDDDTVDVFTSGRKMRLTCSPNIEISLLRKGQTVRLNEALTVVEAGTFESVGEISTLREVLADGHRALVVGHADEERIVWLAEPLVAEDLPDGFPDALNDDTKPRKLRPGDSLLVDTKAGYAFERIPKAEVEDLVLEEVPDVSYEDIGGLTRQIEQIRDAVELPFLHKELYREYALRPPKGVLLYGPPGCGKTLIAKAVANSLAKKMAEVRGDDSREAKSYFLNIKGPELLNKFVGETERHIRLIFQRAREKASEGTPVIVFFDEMDSIFRTRGTGVSSDVETTVVPQLLSEIDGVEGLENVIVIGASNREDMIDPAILRPGRLDVKIKIERPDAEAAQDIYSKYLTETLPVHADDLAEFEGERPACIKAMIEKVVDRMYAEIDDNRFLEVTYANGDKEVMYFKDFNSGAMIQNVVDRAKKNAIKSVLETGQPGLRIQHLLDSIVDEFAENEDLPNTTNPDDWARISGKKGERIVYIRTLVTGKSSSASRAIDTESNLGQYL.

Residues 1–24 (MADSERSEAFGTPDDTPLSSNDAA) are disordered. Residues 19-96 (SSNDAAELEQ…LREEVDRLGQ (78 aa)) adopt a coiled-coil conformation. 296-301 (GCGKTL) is an ATP binding site. A docks into pockets in the proteasome alpha-ring region spans residues 608-609 (YL).

The protein belongs to the AAA ATPase family. Homohexamer. Assembles into a hexameric ring structure that caps the 20S proteasome core. Strongly interacts with the prokaryotic ubiquitin-like protein Pup through a hydrophobic interface; the interacting region of ARC lies in its N-terminal coiled-coil domain. There is one Pup binding site per ARC hexamer ring. Upon ATP-binding, the C-terminus of ARC interacts with the alpha-rings of the proteasome core, possibly by binding to the intersubunit pockets.

The protein operates within protein degradation; proteasomal Pup-dependent pathway. In terms of biological role, ATPase which is responsible for recognizing, binding, unfolding and translocation of pupylated proteins into the bacterial 20S proteasome core particle. May be essential for opening the gate of the 20S proteasome via an interaction with its C-terminus, thereby allowing substrate entry and access to the site of proteolysis. Thus, the C-termini of the proteasomal ATPase may function like a 'key in a lock' to induce gate opening and therefore regulate proteolysis. The protein is Proteasome-associated ATPase of Mycobacterium ulcerans (strain Agy99).